Reading from the N-terminus, the 758-residue chain is 5-methyltetrahydropteroyltriglutamate--homocysteine methyltransferase (758 aa).

5-methyltetrahydropteroyltri-L-glutamate-binding positions include 16–19 and Lys-116; that span reads RELK. L-homocysteine contacts are provided by residues 436–438 and Glu-489; that span reads IGS. L-methionine is bound by residues 436–438 and Glu-489; that span reads IGS. Residues 520 to 521 and Trp-566 contribute to the 5-methyltetrahydropteroyltri-L-glutamate site; that span reads RC. Asp-604 serves as a coordination point for L-homocysteine. Asp-604 contributes to the L-methionine binding site. 5-methyltetrahydropteroyltri-L-glutamate is bound at residue Glu-610. His-646, Cys-648, and Glu-670 together coordinate Zn(2+). Residue His-699 is the Proton donor of the active site. Cys-731 serves as a coordination point for Zn(2+).

It belongs to the vitamin-B12 independent methionine synthase family. It depends on Zn(2+) as a cofactor.

It carries out the reaction 5-methyltetrahydropteroyltri-L-glutamate + L-homocysteine = tetrahydropteroyltri-L-glutamate + L-methionine. Its pathway is amino-acid biosynthesis; L-methionine biosynthesis via de novo pathway; L-methionine from L-homocysteine (MetE route): step 1/1. Catalyzes the transfer of a methyl group from 5-methyltetrahydrofolate to homocysteine resulting in methionine formation. This chain is 5-methyltetrahydropteroyltriglutamate--homocysteine methyltransferase, found in Xylella fastidiosa (strain M23).